The following is a 90-amino-acid chain: Lectin-1 (90 aa).

Q1 is modified (pyrrolidone carboxylic acid). A disulfide bond links C46 and C71.

The N-terminus is blocked. Post-translationally, contains seven disulfide bonds. In terms of processing, proteolytically cleaved. Major mature form may consist of cleaved, disulfide-bonded N-terminal and C-terminal chains.

In terms of biological role, lectin with specificity for complex N-linked glycans and O-linked glycans. Has hemagglutinating activity towards rabbit erythrocytes. The polypeptide is Lectin-1 (Hypnea musciformis (Red alga)).